The sequence spans 495 residues: Probable aspartic-type endopeptidase OPSB (495 aa).

The N-terminal stretch at 1–19 (MRGDSFIWSLATAIPLLST) is a signal peptide. A Peptidase A1 domain is found at 73-408 (YFCNLTLGTP…DLDNNEISIA (336 aa)). A glycan (N-linked (GlcNAc...) asparagine) is linked at Asn76. Asp91 is an active-site residue. Asn136 carries N-linked (GlcNAc...) asparagine glycosylation. Residue Asp290 is part of the active site. Residue Asn413 is glycosylated (N-linked (GlcNAc...) asparagine). The disordered stretch occupies residues 447 to 470 (ATGLPGVETGVPGSRPPSSKAAGQ). Ala467 is lipidated: GPI-anchor amidated alanine. Positions 468-495 (AGQAKRPDFVLGVAAVGLAGAGMLFAAM) are cleaved as a propeptide — removed in mature form.

The protein belongs to the peptidase A1 family.

The protein resides in the cell membrane. Functionally, probable GPI-anchored aspartic-type endopeptidase which contributes to virulence. The sequence is that of Probable aspartic-type endopeptidase OPSB (OPSB) from Arthroderma benhamiae (strain ATCC MYA-4681 / CBS 112371) (Trichophyton mentagrophytes).